A 507-amino-acid polypeptide reads, in one-letter code: ATP synthase subunit alpha, chloroplastic (507 aa).

An ATP-binding site is contributed by 170–177 (GDRQTGKT).

The protein belongs to the ATPase alpha/beta chains family. F-type ATPases have 2 components, CF(1) - the catalytic core - and CF(0) - the membrane proton channel. CF(1) has five subunits: alpha(3), beta(3), gamma(1), delta(1), epsilon(1). CF(0) has four main subunits: a, b, b' and c.

It localises to the plastid. The protein resides in the chloroplast thylakoid membrane. The catalysed reaction is ATP + H2O + 4 H(+)(in) = ADP + phosphate + 5 H(+)(out). In terms of biological role, produces ATP from ADP in the presence of a proton gradient across the membrane. The alpha chain is a regulatory subunit. This is ATP synthase subunit alpha, chloroplastic from Cycas taitungensis (Prince sago).